Consider the following 425-residue polypeptide: Enolase (425 aa).

Q163 lines the (2R)-2-phosphoglycerate pocket. The active-site Proton donor is E205. Mg(2+) contacts are provided by D242, E285, and D312. Residues K337, R366, S367, and K388 each contribute to the (2R)-2-phosphoglycerate site. The active-site Proton acceptor is the K337.

This sequence belongs to the enolase family. It depends on Mg(2+) as a cofactor.

The protein resides in the cytoplasm. It is found in the secreted. It localises to the cell surface. It catalyses the reaction (2R)-2-phosphoglycerate = phosphoenolpyruvate + H2O. The protein operates within carbohydrate degradation; glycolysis; pyruvate from D-glyceraldehyde 3-phosphate: step 4/5. In terms of biological role, catalyzes the reversible conversion of 2-phosphoglycerate (2-PG) into phosphoenolpyruvate (PEP). It is essential for the degradation of carbohydrates via glycolysis. This Granulibacter bethesdensis (strain ATCC BAA-1260 / CGDNIH1) protein is Enolase.